The chain runs to 442 residues: Histidine--tRNA ligase (442 aa).

The segment at 416 to 442 (SGDETTVPVEEFPPEGGEELPTYEDYE) is disordered. Residues 427–442 (FPPEGGEELPTYEDYE) show a composition bias toward acidic residues.

This sequence belongs to the class-II aminoacyl-tRNA synthetase family.

Its subcellular location is the cytoplasm. The enzyme catalyses tRNA(His) + L-histidine + ATP = L-histidyl-tRNA(His) + AMP + diphosphate + H(+). The polypeptide is Histidine--tRNA ligase (Halorubrum lacusprofundi (strain ATCC 49239 / DSM 5036 / JCM 8891 / ACAM 34)).